Here is a 213-residue protein sequence, read N- to C-terminus: Kynurenine formamidase (213 aa).

Substrate is bound at residue Trp18. Zn(2+) is bound by residues His48, His52, and Asp54. The Proton donor/acceptor role is filled by His58. The Zn(2+) site is built by His160 and Glu172.

Belongs to the Cyclase 1 superfamily. KynB family. As to quaternary structure, homodimer. Requires Zn(2+) as cofactor.

The enzyme catalyses N-formyl-L-kynurenine + H2O = L-kynurenine + formate + H(+). Its pathway is amino-acid degradation; L-tryptophan degradation via kynurenine pathway; L-kynurenine from L-tryptophan: step 2/2. Catalyzes the hydrolysis of N-formyl-L-kynurenine to L-kynurenine, the second step in the kynurenine pathway of tryptophan degradation. The polypeptide is Kynurenine formamidase (Burkholderia lata (strain ATCC 17760 / DSM 23089 / LMG 22485 / NCIMB 9086 / R18194 / 383)).